The following is a 130-amino-acid chain: Small ribosomal subunit protein uS9 (130 aa).

Belongs to the universal ribosomal protein uS9 family.

The sequence is that of Small ribosomal subunit protein uS9 from Burkholderia pseudomallei (strain K96243).